The primary structure comprises 267 residues: tRNA pseudouridine synthase A (267 aa).

Asp-51 serves as the catalytic Nucleophile. Tyr-109 lines the substrate pocket.

This sequence belongs to the tRNA pseudouridine synthase TruA family. As to quaternary structure, homodimer.

The catalysed reaction is uridine(38/39/40) in tRNA = pseudouridine(38/39/40) in tRNA. Functionally, formation of pseudouridine at positions 38, 39 and 40 in the anticodon stem and loop of transfer RNAs. The chain is tRNA pseudouridine synthase A from Staphylococcus aureus (strain bovine RF122 / ET3-1).